Here is a 332-residue protein sequence, read N- to C-terminus: Large ribosomal subunit protein uL10 (332 aa).

Residues 294-332 form a disordered region; sequence QAAAAPVAVEDNTEEPEEEEEEEEDAAESAAAGLGALFG. Over residues 304–320 the composition is skewed to acidic residues; the sequence is DNTEEPEEEEEEEEDAA.

It belongs to the universal ribosomal protein uL10 family. As to quaternary structure, part of the 50S ribosomal subunit. Forms part of the ribosomal stalk which helps the ribosome interact with GTP-bound translation factors. Forms a heptameric L10(L12)2(L12)2(L12)2 complex, where L10 forms an elongated spine to which the L12 dimers bind in a sequential fashion.

In terms of biological role, forms part of the ribosomal stalk, playing a central role in the interaction of the ribosome with GTP-bound translation factors. The protein is Large ribosomal subunit protein uL10 of Methanosphaera stadtmanae (strain ATCC 43021 / DSM 3091 / JCM 11832 / MCB-3).